The chain runs to 349 residues: tRNA N6-adenosine threonylcarbamoyltransferase (349 aa).

Fe cation contacts are provided by H118 and H122. Residues 141 to 145, D174, G187, and N280 each bind substrate; that span reads LVSGG. D308 contributes to the Fe cation binding site.

Belongs to the KAE1 / TsaD family. It depends on Fe(2+) as a cofactor.

It is found in the cytoplasm. The catalysed reaction is L-threonylcarbamoyladenylate + adenosine(37) in tRNA = N(6)-L-threonylcarbamoyladenosine(37) in tRNA + AMP + H(+). Functionally, required for the formation of a threonylcarbamoyl group on adenosine at position 37 (t(6)A37) in tRNAs that read codons beginning with adenine. Is involved in the transfer of the threonylcarbamoyl moiety of threonylcarbamoyl-AMP (TC-AMP) to the N6 group of A37, together with TsaE and TsaB. TsaD likely plays a direct catalytic role in this reaction. This Acidovorax sp. (strain JS42) protein is tRNA N6-adenosine threonylcarbamoyltransferase.